The primary structure comprises 752 residues: Phosphoribosylformylglycinamidine synthase subunit PurL (752 aa).

His-58 is an active-site residue. Residues Tyr-61 and Lys-103 each contribute to the ATP site. Glu-105 is a binding site for Mg(2+). Substrate-binding positions include 106–109 and Arg-128; that span reads SHNH. Residue His-107 is the Proton acceptor of the active site. Asp-129 is a Mg(2+) binding site. Gln-253 is a binding site for substrate. Asp-281 contributes to the Mg(2+) binding site. Residue 325–327 coordinates substrate; sequence ESQ. ATP is bound by residues Asp-513 and Gly-550. Asn-551 contributes to the Mg(2+) binding site. Substrate is bound at residue Ser-553.

The protein belongs to the FGAMS family. Monomer. Part of the FGAM synthase complex composed of 1 PurL, 1 PurQ and 2 PurS subunits.

It localises to the cytoplasm. The enzyme catalyses N(2)-formyl-N(1)-(5-phospho-beta-D-ribosyl)glycinamide + L-glutamine + ATP + H2O = 2-formamido-N(1)-(5-O-phospho-beta-D-ribosyl)acetamidine + L-glutamate + ADP + phosphate + H(+). The protein operates within purine metabolism; IMP biosynthesis via de novo pathway; 5-amino-1-(5-phospho-D-ribosyl)imidazole from N(2)-formyl-N(1)-(5-phospho-D-ribosyl)glycinamide: step 1/2. Its function is as follows. Part of the phosphoribosylformylglycinamidine synthase complex involved in the purines biosynthetic pathway. Catalyzes the ATP-dependent conversion of formylglycinamide ribonucleotide (FGAR) and glutamine to yield formylglycinamidine ribonucleotide (FGAM) and glutamate. The FGAM synthase complex is composed of three subunits. PurQ produces an ammonia molecule by converting glutamine to glutamate. PurL transfers the ammonia molecule to FGAR to form FGAM in an ATP-dependent manner. PurS interacts with PurQ and PurL and is thought to assist in the transfer of the ammonia molecule from PurQ to PurL. The protein is Phosphoribosylformylglycinamidine synthase subunit PurL of Streptomyces avermitilis (strain ATCC 31267 / DSM 46492 / JCM 5070 / NBRC 14893 / NCIMB 12804 / NRRL 8165 / MA-4680).